The sequence spans 118 residues: Small ribosomal subunit protein uS13 (118 aa).

The disordered stretch occupies residues 99 to 118; it reads GQRTRTNARTRKGPRKAIKK.

It belongs to the universal ribosomal protein uS13 family. As to quaternary structure, part of the 30S ribosomal subunit. Forms a loose heterodimer with protein S19. Forms two bridges to the 50S subunit in the 70S ribosome.

In terms of biological role, located at the top of the head of the 30S subunit, it contacts several helices of the 16S rRNA. In the 70S ribosome it contacts the 23S rRNA (bridge B1a) and protein L5 of the 50S subunit (bridge B1b), connecting the 2 subunits; these bridges are implicated in subunit movement. Contacts the tRNAs in the A and P-sites. In Xylella fastidiosa (strain M23), this protein is Small ribosomal subunit protein uS13.